The sequence spans 896 residues: DNA mismatch repair protein MutS (896 aa).

599–606 (GPNMAGKS) is a binding site for ATP.

It belongs to the DNA mismatch repair MutS family.

This protein is involved in the repair of mismatches in DNA. It is possible that it carries out the mismatch recognition step. This protein has a weak ATPase activity. The chain is DNA mismatch repair protein MutS from Geobacillus kaustophilus (strain HTA426).